The sequence spans 87 residues: Large ribosomal subunit protein bL31B (87 aa).

It belongs to the bacterial ribosomal protein bL31 family. Type B subfamily. As to quaternary structure, part of the 50S ribosomal subunit.

This chain is Large ribosomal subunit protein bL31B, found in Burkholderia ambifaria (strain MC40-6).